The chain runs to 693 residues: Polyribonucleotide nucleotidyltransferase (693 aa).

Positions 485 and 491 each coordinate Mg(2+). One can recognise a KH domain in the interval 552 to 611 (PRIMVLEINPSKIGDLIGPSGKNIKKIIEETHTTINIKPEGLVYISAPDQESAEKAAQMV). In terms of domain architecture, S1 motif spans 621 to 691 (GDIFLGKVIR…SSGRISLTRK (71 aa)).

The protein belongs to the polyribonucleotide nucleotidyltransferase family. Mg(2+) serves as cofactor.

The protein localises to the cytoplasm. The enzyme catalyses RNA(n+1) + phosphate = RNA(n) + a ribonucleoside 5'-diphosphate. Involved in mRNA degradation. Catalyzes the phosphorolysis of single-stranded polyribonucleotides processively in the 3'- to 5'-direction. This is Polyribonucleotide nucleotidyltransferase from Dictyoglomus thermophilum (strain ATCC 35947 / DSM 3960 / H-6-12).